The sequence spans 165 residues: Phosphopantetheine adenylyltransferase (165 aa).

Thr9 contacts substrate. ATP is bound by residues 9–10 (TF) and His17. Lys41, Leu73, and Arg87 together coordinate substrate. ATP contacts are provided by residues 88–90 (GLR), Glu98, and 123–129 (YQFISGT).

This sequence belongs to the bacterial CoaD family. In terms of assembly, homohexamer. It depends on Mg(2+) as a cofactor.

It is found in the cytoplasm. The catalysed reaction is (R)-4'-phosphopantetheine + ATP + H(+) = 3'-dephospho-CoA + diphosphate. The protein operates within cofactor biosynthesis; coenzyme A biosynthesis; CoA from (R)-pantothenate: step 4/5. Reversibly transfers an adenylyl group from ATP to 4'-phosphopantetheine, yielding dephospho-CoA (dPCoA) and pyrophosphate. The polypeptide is Phosphopantetheine adenylyltransferase (Burkholderia orbicola (strain MC0-3)).